The following is a 101-amino-acid chain: ATP synthase subunit c (101 aa).

2 consecutive transmembrane segments (helical) span residues 31–51 (AFAY…GAGQ) and 81–101 (AISE…IFVG).

It belongs to the ATPase C chain family. As to quaternary structure, F-type ATPases have 2 components, F(1) - the catalytic core - and F(0) - the membrane proton channel. F(1) has five subunits: alpha(3), beta(3), gamma(1), delta(1), epsilon(1). F(0) has three main subunits: a(1), b(2) and c(10-14). The alpha and beta chains form an alternating ring which encloses part of the gamma chain. F(1) is attached to F(0) by a central stalk formed by the gamma and epsilon chains, while a peripheral stalk is formed by the delta and b chains.

The protein resides in the cell membrane. Its function is as follows. F(1)F(0) ATP synthase produces ATP from ADP in the presence of a proton or sodium gradient. F-type ATPases consist of two structural domains, F(1) containing the extramembraneous catalytic core and F(0) containing the membrane proton channel, linked together by a central stalk and a peripheral stalk. During catalysis, ATP synthesis in the catalytic domain of F(1) is coupled via a rotary mechanism of the central stalk subunits to proton translocation. Key component of the F(0) channel; it plays a direct role in translocation across the membrane. A homomeric c-ring of between 10-14 subunits forms the central stalk rotor element with the F(1) delta and epsilon subunits. The sequence is that of ATP synthase subunit c from Mesomycoplasma hyopneumoniae (strain J / ATCC 25934 / NCTC 10110) (Mycoplasma hyopneumoniae).